Here is a 1024-residue protein sequence, read N- to C-terminus: Multidrug resistance protein MdtC (1024 aa).

The next 12 membrane-spanning stretches (helical) occupy residues 12–32 (VATTLLTLAITLSGIIGFSLL), 333–353 (EVERSLVIAVALVILVVFIFL), 360–380 (LIPAVAVPVSLIGTFAAMYLC), 387–407 (LSLMALTIATGFVVDDAIVVL), 435–455 (VLSMSISLVAVFIPLLLMAGL), 469–489 (VAIGISLVISLTLTPMMCAWL), 528–548 (WVMVVLLSTIALNVWLYISIP), 853–873 (LWLIMAAIATVYIVLGILYES), 875–895 (VHPLTILSTLPSAGVGALLAL), 897–917 (LFDAPFSLIALIGIMLLIGIV), 953–973 (PIIMTTLAALFGALPLVLSSG), and 984–1004 (ITIVGGLVVSQLLTLYTTPVI).

It belongs to the resistance-nodulation-cell division (RND) (TC 2.A.6) family. MdtC subfamily. In terms of assembly, part of a tripartite efflux system composed of MdtA, MdtB and MdtC. MdtC forms a heteromultimer with MdtB.

It localises to the cell inner membrane. This chain is Multidrug resistance protein MdtC, found in Yersinia pseudotuberculosis serotype O:1b (strain IP 31758).